The primary structure comprises 570 residues: Protein HEATR9 (570 aa).

The chain is Protein HEATR9 (HEATR9) from Macaca fascicularis (Crab-eating macaque).